Here is a 421-residue protein sequence, read N- to C-terminus: Synaptotagmin-12 (421 aa).

At 1-18 the chain is on the vesicular side; it reads MAVDVAEYHLSVIKSPPG. Residues 19 to 39 form a helical membrane-spanning segment; the sequence is WEVGVYAAGALALLGIAAVSL. The Cytoplasmic segment spans residues 40 to 421; sequence WKLWTSGSFP…VSMWHAVRRN (382 aa). Residues S97, S99, and S214 each carry the phosphoserine modification. C2 domains follow at residues 152–272 and 283–416; these read TLGQ…SGWL and AVGE…SMWH.

The protein belongs to the synaptotagmin family. As to quaternary structure, homodimer. Can also form heterodimers. Interacts with SYT1. Phosphorylation of Ser-97 is required for mossy-fiber long-term potentiation.

The protein localises to the cytoplasmic vesicle. The protein resides in the secretory vesicle. It is found in the synaptic vesicle membrane. Its function is as follows. Synaptic vesicle phosphoprotein that enhances spontaneous neurotransmitter release but does not effect induced neurotransmitter release. Unlike other synaptotagmins, it does not bind Ca(2+) or phospholipids. Essential for mossy-fiber long-term potentiation in the hippocampus. In Homo sapiens (Human), this protein is Synaptotagmin-12 (SYT12).